The chain runs to 151 residues: Putative pre-16S rRNA nuclease (151 aa).

The protein belongs to the YqgF nuclease family.

The protein resides in the cytoplasm. In terms of biological role, could be a nuclease involved in processing of the 5'-end of pre-16S rRNA. The sequence is that of Putative pre-16S rRNA nuclease from Chlamydia pneumoniae (Chlamydophila pneumoniae).